Reading from the N-terminus, the 196-residue chain is Chaperone protein TorD (196 aa).

Belongs to the TorD/DmsD family. TorD subfamily.

It is found in the cytoplasm. Functionally, involved in the biogenesis of TorA. Acts on TorA before the insertion of the molybdenum cofactor and, as a result, probably favors a conformation of the apoenzyme that is competent for acquiring the cofactor. The sequence is that of Chaperone protein TorD from Pasteurella multocida (strain Pm70).